The primary structure comprises 302 residues: Phosphoribosylaminoimidazole-succinocarboxamide synthase (302 aa).

This sequence belongs to the SAICAR synthetase family.

The catalysed reaction is 5-amino-1-(5-phospho-D-ribosyl)imidazole-4-carboxylate + L-aspartate + ATP = (2S)-2-[5-amino-1-(5-phospho-beta-D-ribosyl)imidazole-4-carboxamido]succinate + ADP + phosphate + 2 H(+). The protein operates within purine metabolism; IMP biosynthesis via de novo pathway; 5-amino-1-(5-phospho-D-ribosyl)imidazole-4-carboxamide from 5-amino-1-(5-phospho-D-ribosyl)imidazole-4-carboxylate: step 1/2. The protein is Phosphoribosylaminoimidazole-succinocarboxamide synthase of Polaromonas sp. (strain JS666 / ATCC BAA-500).